The following is a 549-amino-acid chain: Eukaryotic translation initiation factor 4B2 (549 aa).

2 disordered regions span residues 1-446 (MSKP…DLIR) and 465-549 (FRPR…REGW). Residues 24-46 (AEATATAADSQSFPSLKEAATAK) show a composition bias toward low complexity. Composition is skewed to gly residues over residues 96-109 (RLGG…GGRS) and 126-136 (SWGGGGGGRRS). Positions 169–176 (GKKSLPSF) match the Nuclear localization signal 1 motif. The span at 184–218 (RYGGGGGSFGGGGGGGAGSYGGGGAGAGSGGGGGF) shows a compositional bias: gly residues. The short motif at 234-241 (SSTFGSGF) is the Nuclear localization signal 2 element. The span at 263–278 (QEERRRLVFEPRKADT) shows a compositional bias: basic and acidic residues. Polar residues predominate over residues 281–292 (SETPTAVKTSKP). Residues 299 to 323 (RPREQVLAEKGLDWKKLDSDIEAKK) are compositionally biased toward basic and acidic residues. The segment covering 327 to 349 (SRPSSAQSSRPSSAQSNRSESSA) has biased composition (low complexity). 3 stretches are compositionally biased toward basic and acidic residues: residues 369 to 431 (AKPR…KESQ), 485 to 507 (ERPH…ERPR), and 518 to 549 (PVDD…REGW).

This sequence belongs to the eIF-4 subunit B family. Homodimer. Nonspherical monomer. mRNA-discriminating component of initiation complexes. Post-translationally, phosphorylated.

The protein resides in the nucleus. Its function is as follows. Promotes the eIF4F and eIF4A RNA-dependent ATP-hydrolysis activity with different efficiency depending on mRNAs, thus providing mRNA discrimination during initiation of translation. This chain is Eukaryotic translation initiation factor 4B2, found in Arabidopsis thaliana (Mouse-ear cress).